The sequence spans 1054 residues: Bifunctional glutamine synthetase adenylyltransferase/adenylyl-removing enzyme (1054 aa).

The adenylyl removase stretch occupies residues 1 to 535 (MRKTLPSIGA…LHRKLFYRPL (535 aa)). Composition is skewed to polar residues over residues 138–150 (SFSSESQQPQGSD) and 165–175 (DTANTDLSTPG). A disordered region spans residues 138–175 (SFSSESQQPQGSDSDSEFSFGADLSADDTANTDLSTPG). The tract at residues 541–1054 (NISVGTLKLS…WGVDSIEHDY (514 aa)) is adenylyl transferase.

The protein belongs to the GlnE family. Mg(2+) serves as cofactor.

The catalysed reaction is [glutamine synthetase]-O(4)-(5'-adenylyl)-L-tyrosine + phosphate = [glutamine synthetase]-L-tyrosine + ADP. It carries out the reaction [glutamine synthetase]-L-tyrosine + ATP = [glutamine synthetase]-O(4)-(5'-adenylyl)-L-tyrosine + diphosphate. Its function is as follows. Involved in the regulation of glutamine synthetase GlnA, a key enzyme in the process to assimilate ammonia. When cellular nitrogen levels are high, the C-terminal adenylyl transferase (AT) inactivates GlnA by covalent transfer of an adenylyl group from ATP to specific tyrosine residue of GlnA, thus reducing its activity. Conversely, when nitrogen levels are low, the N-terminal adenylyl removase (AR) activates GlnA by removing the adenylyl group by phosphorolysis, increasing its activity. The regulatory region of GlnE binds the signal transduction protein PII (GlnB) which indicates the nitrogen status of the cell. This Corynebacterium diphtheriae (strain ATCC 700971 / NCTC 13129 / Biotype gravis) protein is Bifunctional glutamine synthetase adenylyltransferase/adenylyl-removing enzyme.